A 317-amino-acid chain; its full sequence is CXXC-type zinc finger protein 5 (317 aa).

The span at 1–10 shows a compositional bias: gly residues; it reads MSSLGGGSQD. The segment at 1–92 is disordered; that stretch reads MSSLGGGSQD…SFGSSGGGGS (92 aa). 2 stretches are compositionally biased toward low complexity: residues 11–27 and 36–51; these read AGGSSSSSNTNSSSGSG and STAVAATTAPTSVADD. The CXXC-type zinc-finger motif lies at 251 to 292; that stretch reads GKKKRKRCGMCAPCRRRINCEQCSSCRNRKTGHQICKFRKCE. The Nuclear localization signal signature appears at 252 to 257; it reads KKKRKR. Cys-258, Cys-261, Cys-264, Cys-270, Cys-273, Cys-276, Cys-286, and Cys-291 together coordinate Zn(2+).

In terms of assembly, interacts with DVL1. Interacts with RBPJ.

The protein localises to the nucleus. It localises to the cytoplasm. In terms of biological role, may indirectly participate in activation of the NF-kappa-B and MAPK pathways. Acts as a mediator of BMP4-mediated modulation of canonical Wnt signaling activity in neural stem cells. Required for DNA damage-induced ATM phosphorylation, p53 activation and cell cycle arrest. Involved in myelopoiesis. Binds to the oxygen responsive element of COX4I2 and represses its transcription under hypoxia conditions (4% oxygen), as well as normoxia conditions (20% oxygen). May repress COX4I2 transactivation induced by CHCHD2 and RBPJ. Binds preferentially to DNA containing cytidine-phosphate-guanosine (CpG) dinucleotides over CpH (H=A, T, and C), hemimethylated-CpG and hemimethylated-hydroxymethyl-CpG. This is CXXC-type zinc finger protein 5 (Cxxc5) from Mus musculus (Mouse).